The sequence spans 256 residues: MDFEKAQNRIIEFIRNETDKAGVDGAVVGISGGIDSALTATLTVEALGKERVLGLHMPESSLTPAVDSEDAKILADWLGIEYRTIDISGIVSAFMASIPESESSDRLTRGNLKARTRMSLLYFHANRLNRMVVGTGNKTEILLGYYTKYGDGGVDLEPIGGIYKTEVWELSRRLGIPDPLITKKPSAGLWTGQTDEAELGISYLKVDDVLRMIEEGAEQEKILKDTGISIEQLNSVTRRIERNEHKRKSPPVPELY.

29 to 36 serves as a coordination point for ATP; the sequence is GISGGIDS. D35 is a binding site for Mg(2+). R115 is a binding site for deamido-NAD(+). ATP is bound at residue T135. E140 is a binding site for Mg(2+). Residues K148 and D155 each contribute to the deamido-NAD(+) site. Residues K164 and S186 each contribute to the ATP site. 245-246 contacts deamido-NAD(+); that stretch reads HK.

The protein belongs to the NAD synthetase family. As to quaternary structure, homodimer.

It catalyses the reaction deamido-NAD(+) + NH4(+) + ATP = AMP + diphosphate + NAD(+) + H(+). The protein operates within cofactor biosynthesis; NAD(+) biosynthesis; NAD(+) from deamido-NAD(+) (ammonia route): step 1/1. Functionally, catalyzes the ATP-dependent amidation of deamido-NAD to form NAD. Uses ammonia as a nitrogen source. The polypeptide is NH(3)-dependent NAD(+) synthetase (Methanosarcina acetivorans (strain ATCC 35395 / DSM 2834 / JCM 12185 / C2A)).